A 120-amino-acid chain; its full sequence is NAD(P)H-quinone oxidoreductase subunit 3, chloroplastic (120 aa).

3 consecutive transmembrane segments (helical) span residues 10 to 30 (LWFF…ISEI), 64 to 84 (MFAL…PWAI), and 89 to 109 (LGIS…VGLV).

Belongs to the complex I subunit 3 family. In terms of assembly, NDH is composed of at least 16 different subunits, 5 of which are encoded in the nucleus.

The protein resides in the plastid. The protein localises to the chloroplast thylakoid membrane. The enzyme catalyses a plastoquinone + NADH + (n+1) H(+)(in) = a plastoquinol + NAD(+) + n H(+)(out). It carries out the reaction a plastoquinone + NADPH + (n+1) H(+)(in) = a plastoquinol + NADP(+) + n H(+)(out). In terms of biological role, NDH shuttles electrons from NAD(P)H:plastoquinone, via FMN and iron-sulfur (Fe-S) centers, to quinones in the photosynthetic chain and possibly in a chloroplast respiratory chain. The immediate electron acceptor for the enzyme in this species is believed to be plastoquinone. Couples the redox reaction to proton translocation, and thus conserves the redox energy in a proton gradient. The polypeptide is NAD(P)H-quinone oxidoreductase subunit 3, chloroplastic (Chara vulgaris (Common stonewort)).